A 452-amino-acid chain; its full sequence is 23S rRNA (uracil(1939)-C(5))-methyltransferase RlmD (452 aa).

The TRAM domain maps to 1–57; it reads METEVNVAEISALDYEGRGVTKVGGKTVFIKGALPSERVGFRIVRQKKQFDEAEAVA. Residues Cys-70, Cys-76, Cys-79, and Cys-157 each coordinate [4Fe-4S] cluster. Positions 269, 298, 303, 319, 347, and 368 each coordinate S-adenosyl-L-methionine. Cys-395 (nucleophile) is an active-site residue.

The protein belongs to the class I-like SAM-binding methyltransferase superfamily. RNA M5U methyltransferase family. RlmD subfamily.

The enzyme catalyses uridine(1939) in 23S rRNA + S-adenosyl-L-methionine = 5-methyluridine(1939) in 23S rRNA + S-adenosyl-L-homocysteine + H(+). Catalyzes the formation of 5-methyl-uridine at position 1939 (m5U1939) in 23S rRNA. In Neisseria lactamica (strain 020-06), this protein is 23S rRNA (uracil(1939)-C(5))-methyltransferase RlmD.